We begin with the raw amino-acid sequence, 507 residues long: UDP-N-acetylglucosamine 1-carboxyvinyltransferase 1 (507 aa).

Residue 41–42 coordinates phosphoenolpyruvate; the sequence is KN. Residue arginine 112 coordinates UDP-N-acetyl-alpha-D-glucosamine. The active-site Proton donor is the cysteine 136. Cysteine 136 carries the 2-(S-cysteinyl)pyruvic acid O-phosphothioketal modification. UDP-N-acetyl-alpha-D-glucosamine-binding positions include 141–145, aspartate 328, and leucine 350; that span reads RPIDL.

The protein belongs to the EPSP synthase family. MurA subfamily.

Its subcellular location is the cytoplasm. The enzyme catalyses phosphoenolpyruvate + UDP-N-acetyl-alpha-D-glucosamine = UDP-N-acetyl-3-O-(1-carboxyvinyl)-alpha-D-glucosamine + phosphate. It functions in the pathway cell wall biogenesis; peptidoglycan biosynthesis. Cell wall formation. Adds enolpyruvyl to UDP-N-acetylglucosamine. This chain is UDP-N-acetylglucosamine 1-carboxyvinyltransferase 1, found in Legionella pneumophila (strain Lens).